A 332-amino-acid polypeptide reads, in one-letter code: Biotin synthase (332 aa).

Residues 53-282 form the Radical SAM core domain; it reads HFGKKVKLNM…TKEIRISGGR (230 aa). [4Fe-4S] cluster contacts are provided by cysteine 71, cysteine 75, and cysteine 78. [2Fe-2S] cluster contacts are provided by cysteine 115, cysteine 147, cysteine 207, and arginine 277.

This sequence belongs to the radical SAM superfamily. Biotin synthase family. As to quaternary structure, homodimer. [4Fe-4S] cluster serves as cofactor. [2Fe-2S] cluster is required as a cofactor.

The catalysed reaction is (4R,5S)-dethiobiotin + (sulfur carrier)-SH + 2 reduced [2Fe-2S]-[ferredoxin] + 2 S-adenosyl-L-methionine = (sulfur carrier)-H + biotin + 2 5'-deoxyadenosine + 2 L-methionine + 2 oxidized [2Fe-2S]-[ferredoxin]. It participates in cofactor biosynthesis; biotin biosynthesis; biotin from 7,8-diaminononanoate: step 2/2. Functionally, catalyzes the conversion of dethiobiotin (DTB) to biotin by the insertion of a sulfur atom into dethiobiotin via a radical-based mechanism. The chain is Biotin synthase from Bacillus cereus (strain ATCC 10987 / NRS 248).